The following is a 159-amino-acid chain: MAFSLLQFILSAHGSMETRNQDFQPWKDYMGLADMIRGMKRQEMQSDADSDEQAAALLESPSGPIRSRDSPEQNTSPGGGKPKSSPAERKFCSFCKHNGETEAVYTSHYLKNRDGDVMCPYLRQYKCPLCGATGAKAHTKRFCPMVDKNYCSVYAKSTW.

The disordered stretch occupies residues 42–87 (QEMQSDADSDEQAAALLESPSGPIRSRDSPEQNTSPGGGKPKSSPA). A Nanos-type zinc finger spans residues 91–145 (FCSFCKHNGETEAVYTSHYLKNRDGDVMCPYLRQYKCPLCGATGAKAHTKRFCPM). Zn(2+)-binding residues include cysteine 92, cysteine 95, histidine 108, cysteine 119, cysteine 127, cysteine 130, histidine 138, and cysteine 143. 2 short sequence motifs (C2HC) span residues 92–119 (CSFC…DVMC) and 127–143 (CPLC…KRFC). Residues 92-159 (CSFCKHNGET…YCSVYAKSTW (68 aa)) form an interaction with mylpfa region.

Belongs to the nanos family. As to quaternary structure, interacts (via C-terminus) with myosin mylpfa/mylz2; the interaction negatively regulates mylpfa phosphorylation. As to expression, in the embryo, displays early ubiquitous expression before being restricted to primordial germ cells in a 3'-UTR-dependent manner. Expressed in early stage germ cells in larval and adult ovaries.

The protein resides in the cytoplasm. It is found in the perinuclear region. Its function is as follows. RNA-binding protein which binds to RNA with no sequence specificity. Probably represses translation of specific mRNAs. Essential for the development of primordial germ cells (PGCs) by ensuring their proper migration and survival but is not required for PGC specification. Also required to maintain oocyte production in the adult ovary. Negatively regulates phosphorylation of myosin mylpfa/mylz2. In Danio rerio (Zebrafish), this protein is Nanos homolog 3.